A 64-amino-acid polypeptide reads, in one-letter code: Large ribosomal subunit protein uL30 (64 aa).

This sequence belongs to the universal ribosomal protein uL30 family. In terms of assembly, part of the 50S ribosomal subunit.

This chain is Large ribosomal subunit protein uL30, found in Bradyrhizobium diazoefficiens (strain JCM 10833 / BCRC 13528 / IAM 13628 / NBRC 14792 / USDA 110).